The chain runs to 160 residues: Major pollen allergen Bet v 1-C (160 aa).

4 residues coordinate brassinolide: K55, Y82, Y84, and N101.

The protein belongs to the BetVI family.

It is found in the cytoplasm. In terms of biological role, may be a general steroid carrier protein. In Betula pendula (European white birch), this protein is Major pollen allergen Bet v 1-C (BETV1C).